The primary structure comprises 56 residues: Large ribosomal subunit protein uL30 (56 aa).

Belongs to the universal ribosomal protein uL30 family. In terms of assembly, part of the 50S ribosomal subunit.

The sequence is that of Large ribosomal subunit protein uL30 from Nitratidesulfovibrio vulgaris (strain DSM 19637 / Miyazaki F) (Desulfovibrio vulgaris).